The sequence spans 214 residues: Glycoprotein Q2 (214 aa).

Residues 1-19 (MHFLVVYILIHFHAYRGMA) form the signal peptide. N-linked (GlcNAc...) asparagine; by host glycans are attached at residues N41, N74, N110, and N210.

As to quaternary structure, interacts with isoform gQ1. The heterodimer gQ1-gQ2 associates with the glycoprotein complex gH-gL to form a tetrameric complex. The gH/gL/gQ1/gQ2 complex binds to human receptor CD46. In terms of processing, glycosylated by host.

It localises to the virion membrane. It is found in the host endoplasmic reticulum-Golgi intermediate compartment. In terms of biological role, plays a role in virus entry by participating in host receptor binding at the cell surface. The sequence is that of Glycoprotein Q2 from Human herpesvirus 6A (strain Uganda-1102) (HHV-6 variant A).